Here is a 135-residue protein sequence, read N- to C-terminus: Ribonuclease P protein component (135 aa).

Belongs to the RnpA family. In terms of assembly, consists of a catalytic RNA component (M1 or rnpB) and a protein subunit.

The catalysed reaction is Endonucleolytic cleavage of RNA, removing 5'-extranucleotides from tRNA precursor.. Its function is as follows. RNaseP catalyzes the removal of the 5'-leader sequence from pre-tRNA to produce the mature 5'-terminus. It can also cleave other RNA substrates such as 4.5S RNA. The protein component plays an auxiliary but essential role in vivo by binding to the 5'-leader sequence and broadening the substrate specificity of the ribozyme. In Saccharophagus degradans (strain 2-40 / ATCC 43961 / DSM 17024), this protein is Ribonuclease P protein component.